A 365-amino-acid polypeptide reads, in one-letter code: Hematopoietic SH2 domain-containing protein homolog (365 aa).

An SH2 domain is found at 34–125; sequence WFHGIISRKA…PYNELLTVAC (92 aa). Disordered stretches follow at residues 199–278 and 335–365; these read QSTD…QQKP and AEHP…APGY. The span at 257-277 shows a compositional bias: polar residues; that stretch reads QQITPNTPNEGRTQQKNQQQK.

May be an adapter protein involved in tyrosine kinase signaling. The sequence is that of Hematopoietic SH2 domain-containing protein homolog (hsh2d) from Danio rerio (Zebrafish).